The following is a 122-amino-acid chain: uncharacterized protein (122 aa).

2 helical membrane-spanning segments follow: residues 14–34 and 83–103; these read WLWI…FNNV and IIGV…YFII.

It is found in the cell membrane. This is an uncharacterized protein from Ureaplasma parvum serovar 3 (strain ATCC 700970).